The following is an 85-amino-acid chain: Small ribosomal subunit protein bS20 (85 aa).

Residues 1 to 22 are disordered; that stretch reads MPQIKSAIKRVKTQNATNKRNA. Residues 13 to 22 show a composition bias toward polar residues; sequence TQNATNKRNA.

It belongs to the bacterial ribosomal protein bS20 family.

Binds directly to 16S ribosomal RNA. In Lactobacillus acidophilus (strain ATCC 700396 / NCK56 / N2 / NCFM), this protein is Small ribosomal subunit protein bS20.